The primary structure comprises 758 residues: Amyloid beta precursor protein binding family B member 2 (758 aa).

S123 carries the phosphoserine modification. The interval 134 to 154 (KLEGKEPHPQDSSSCEILPSQ) is disordered. S160 carries the phosphoserine modification. A compositionally biased stretch (basic and acidic residues) spans 176 to 190 (EQNRGNHHGTAEEKS). Disordered regions lie at residues 176-195 (EQNR…PVQG), 206-295 (LLLQ…LPPG), and 326-351 (DLQG…KQPW). Polar residues-rich tracts occupy residues 212–230 (NRPQ…SSSP) and 261–275 (SWTT…PSSP). The region spanning 290–322 (PDLPPGWKRVSDIAGTYYWHIPTGTTQWERPVS) is the WW domain. Over residues 331–340 (RKGSLSSVTP) the composition is skewed to polar residues. A phosphoserine mark is found at S334, S409, and S412. 2 PID domains span residues 413-578 (DPEA…LQVD) and 584-736 (TELV…VTTN).

Interacts (via C-terminus) with APP (via C-terminus). Interacts with APLP2 (via cytoplasmic domain). In terms of tissue distribution, widely expressed.

Its subcellular location is the endoplasmic reticulum. The protein localises to the golgi apparatus. It is found in the early endosome. Its function is as follows. Plays a role in the maintenance of lens transparency, and may also play a role in muscle cell strength. Involved in hippocampal neurite branching and neuromuscular junction formation, as a result plays a role in spatial memory functioning. Activates transcription of APP. This Homo sapiens (Human) protein is Amyloid beta precursor protein binding family B member 2.